The following is a 113-amino-acid chain: Large ribosomal subunit protein bL19 (113 aa).

This sequence belongs to the bacterial ribosomal protein bL19 family.

Functionally, this protein is located at the 30S-50S ribosomal subunit interface and may play a role in the structure and function of the aminoacyl-tRNA binding site. The sequence is that of Large ribosomal subunit protein bL19 from Mycobacterium sp. (strain JLS).